We begin with the raw amino-acid sequence, 583 residues long: Glycine--tRNA ligase (583 aa).

2 residues coordinate substrate: R100 and E166. Residues 198–200, 208–213, 328–329, and 443–446 each bind ATP; these read RNE, VRLREF, EV, and GTDR. 213 to 217 is a binding site for substrate; it reads FTIME. 439–443 serves as a coordination point for substrate; it reads EPSFG.

Belongs to the class-II aminoacyl-tRNA synthetase family.

The protein resides in the cytoplasm. It catalyses the reaction tRNA(Gly) + glycine + ATP = glycyl-tRNA(Gly) + AMP + diphosphate. Catalyzes the attachment of glycine to tRNA(Gly). In Aeropyrum pernix (strain ATCC 700893 / DSM 11879 / JCM 9820 / NBRC 100138 / K1), this protein is Glycine--tRNA ligase.